A 270-amino-acid polypeptide reads, in one-letter code: Chlorophyll a-b binding protein 7, chloroplastic (270 aa).

The N-terminal 42 residues, 1 to 42 (MASACASSTIAAVAFSSPSSRRNGSIVGTTKASFLGGRRLRV), are a transit peptide targeting the chloroplast. Trp68 serves as a coordination point for chlorophyll b. Chlorophyll a-binding residues include Phe88, Glu107, and His110. Arg112 provides a ligand contact to chlorophyll b. A helical membrane pass occupies residues 113–133 (WAMLGAAGIFIPELLTKIGIL). Gln144 is a chlorophyll a binding site. Residues 146-166 (YFTDTTTLFIVELVLIGWAEG) form a helical membrane-spanning segment. 3 residues coordinate chlorophyll b: Ile155, Glu165, and Arg168. Residues Lys221, Glu222, Asn225, Arg227, Gln239, and His254 each coordinate chlorophyll a. A helical membrane pass occupies residues 228–248 (LAMLAVMGAWFQHIYTGTGPI).

Belongs to the light-harvesting chlorophyll a/b-binding (LHC) protein family. The LHC complex consists of chlorophyll a-b binding proteins. Binds at least 14 chlorophylls (8 Chl-a and 6 Chl-b) and carotenoids such as lutein and neoxanthin. is required as a cofactor. Photoregulated by reversible phosphorylation of its threonine residues.

It is found in the plastid. Its subcellular location is the chloroplast thylakoid membrane. In terms of biological role, the light-harvesting complex (LHC) functions as a light receptor, it captures and delivers excitation energy to photosystems with which it is closely associated. In Solanum lycopersicum (Tomato), this protein is Chlorophyll a-b binding protein 7, chloroplastic (CAB7).